Consider the following 92-residue polypeptide: Co-chaperonin GroES (92 aa).

Belongs to the GroES chaperonin family. Heptamer of 7 subunits arranged in a ring. Interacts with the chaperonin GroEL.

It is found in the cytoplasm. Its function is as follows. Together with the chaperonin GroEL, plays an essential role in assisting protein folding. The GroEL-GroES system forms a nano-cage that allows encapsulation of the non-native substrate proteins and provides a physical environment optimized to promote and accelerate protein folding. GroES binds to the apical surface of the GroEL ring, thereby capping the opening of the GroEL channel. This is Co-chaperonin GroES from Thermotoga neapolitana.